We begin with the raw amino-acid sequence, 777 residues long: Glucocorticoid receptor (777 aa).

A compositionally biased stretch (basic and acidic residues) spans 1 to 14; sequence MDSKESLTPGKEEN. The segment at 1–23 is disordered; the sequence is MDSKESLTPGKEENPSSVLTQER. The tract at residues 1–420 is modulating; sequence MDSKESLTPG…TATTGPPPKL (420 aa). T8 carries the post-translational modification Phosphothreonine. R23 carries the post-translational modification Omega-N-methylarginine. Phosphoserine occurs at positions 45, 113, 134, and 141. Positions 130-182 are disordered; sequence NRSTSVPENPKSSASSSVSAAPKEKEFPKTHSDVSSEQQNLKGQTGTNGGNVK. Positions 134–150 are enriched in low complexity; sequence SVPENPKSSASSSVSAA. Positions 151–163 are enriched in basic and acidic residues; that stretch reads PKEKEFPKTHSDV. Over residues 164–174 the composition is skewed to polar residues; the sequence is SSEQQNLKGQT. Residues S203, S211, and S226 each carry the phosphoserine modification. K258 is covalently cross-linked (Glycyl lysine isopeptide (Lys-Gly) (interchain with G-Cter in SUMO2)). S267 carries the phosphoserine modification. Glycyl lysine isopeptide (Lys-Gly) (interchain with G-Cter in SUMO); alternate cross-links involve residues K277 and K293. Residues K277 and K293 each participate in a glycyl lysine isopeptide (Lys-Gly) (interchain with G-Cter in SUMO2); alternate cross-link. Residues 394 to 414 show a composition bias toward low complexity; it reads SSPSMRPDVSSPPSSSSTATT. The disordered stretch occupies residues 394–415; that stretch reads SSPSMRPDVSSPPSSSSTATTG. Residue S404 is modified to Phosphoserine. K419 is covalently cross-linked (Glycyl lysine isopeptide (Lys-Gly) (interchain with G-Cter in ubiquitin)). NR C4-type zinc fingers lie at residues 421–441 and 457–481; these read CLVC…CGSC and CAGR…YRKC. The nuclear receptor DNA-binding region spans 421 to 486; sequence CLVCSDEASG…RYRKCLQAGM (66 aa). K480, K492, K494, and K495 each carry N6-acetyllysine. Residues 485 to 777 form an interaction with CLOCK region; sequence GMNLEARKTK…NIKKLLFHQK (293 aa). A hinge region spans residues 487 to 523; sequence NLEARKTKKKIKGIQQATTGVSQETSENPANKTIVPA. Positions 524–758 constitute an NR LBD domain; the sequence is TLPQLTPTLV…FPEMLAEIIT (235 aa). The interaction with CRY1 stretch occupies residues 532–697; sequence LVSLLEVIEP…EIRMTYIKEL (166 aa). Residue K703 forms a Glycyl lysine isopeptide (Lys-Gly) (interchain with G-Cter in SUMO) linkage.

Belongs to the nuclear hormone receptor family. NR3 subfamily. Heteromultimeric cytoplasmic complex with HSP90AA1, HSPA1A/HSPA1B, and FKBP5 or another immunophilin such as PPID, STIP1, or the immunophilin homolog PPP5C. Upon ligand binding FKBP5 dissociates from the complex and FKBP4 takes its place, thereby linking the complex to dynein and mediating transport to the nucleus, where the complex dissociates. Probably forms a complex composed of chaperones HSP90 and HSP70, co-chaperones CDC37, PPP5C, TSC1 and client protein TSC2, CDK4, AKT, RAF1 and NR3C1; this complex does not contain co-chaperones STIP1/HOP and PTGES3/p23. Directly interacts with UNC45A. Binds to DNA as a homodimer, and as heterodimer with NR3C2 or the retinoid X receptor. Binds STAT5A and STAT5B homodimers and heterodimers. Interacts with NRIP1, POU2F1, POU2F2 and TRIM28. Interacts with several coactivator complexes, including the SMARCA4 complex, CREBBP/EP300, TADA2L (Ada complex) and p160 coactivators such as NCOA2 and NCOA6. Interaction with BAG1 inhibits transactivation. Interacts with HEXIM1 and TGFB1I1. Interacts with NCOA1. Interacts with NCOA3, SMARCA4, SMARCC1, SMARCD1, and SMARCE1. Interacts with CLOCK, CRY1 and CRY2 in a ligand-dependent fashion. Interacts with CIART. Interacts with RWDD3. Interacts with UBE2I/UBC9 and this interaction is enhanced in the presence of RWDD3. Interacts with GRIP1. Interacts with NR4A3 (via nuclear receptor DNA-binding domain), represses transcription activity of NR4A3 on the POMC promoter Nur response element (NurRE). Directly interacts with PNRC2 to attract and form a complex with UPF1 and DCP1A; the interaction leads to rapid mRNA degradation. Interacts with GSK3B. Interacts with FNIP1 and FNIP2. Interacts (via C-terminus) with HNRNPU (via C-terminus). Interacts with MCM3AP. Interacts (via domain NR LBD) with HSP90AA1 and HSP90AB1. In the absence of hormonal ligand, interacts with TACC1. Interacts (via NR LBD domain) with ZNF764 (via KRAB domain); the interaction regulates transcription factor activity of NR3C1 by directing its actions toward certain biologic pathways. Post-translationally, acetylation by CLOCK reduces its binding to glucocorticoid response elements and its transcriptional activity. Increased proteasome-mediated degradation in response to glucocorticoids. In terms of processing, phosphorylated in the absence of hormone; becomes hyperphosphorylated in the presence of glucocorticoid. The Ser-203, Ser-226 and Ser-404-phosphorylated forms are mainly cytoplasmic, and the Ser-211-phosphorylated form is nuclear. Phosphorylation at Ser-211 increases transcriptional activity. Phosphorylation at Ser-203, Ser-226 and Ser-404 decreases signaling capacity. Phosphorylation at Ser-404 may protect from glucocorticoid-induced apoptosis. Phosphorylation at Ser-203 and Ser-211 is not required in regulation of chromosome segregation. May be dephosphorylated by PPP5C, attenuates NR3C1 action. Post-translationally, ubiquitinated by UBR5, leading to its degradation: UBR5 specifically recognizes and binds ligand-bound NR3C1 when it is not associated with coactivators (NCOAs). In presence of NCOAs, the UBR5-degron is not accessible, preventing its ubiquitination and degradation. Sumoylation at Lys-277 and Lys-293 negatively regulates its transcriptional activity. Sumoylation at Lys-703 positively regulates its transcriptional activity in the presence of RWDD3. Sumoylation at Lys-277 and Lys-293 is dispensable whereas sumoylation at Lys-703 is critical for the stimulatory effect of RWDD3 on its transcriptional activity. Heat shock increases sumoylation in a RWWD3-dependent manner.

The protein resides in the cytoplasm. Its subcellular location is the nucleus. The protein localises to the mitochondrion. It is found in the cytoskeleton. It localises to the spindle. The protein resides in the microtubule organizing center. Its subcellular location is the centrosome. The protein localises to the chromosome. It is found in the nucleoplasm. Receptor for glucocorticoids (GC). Has a dual mode of action: as a transcription factor that binds to glucocorticoid response elements (GRE), both for nuclear and mitochondrial DNA, and as a modulator of other transcription factors. Affects inflammatory responses, cellular proliferation and differentiation in target tissues. Involved in chromatin remodeling. Plays a role in rapid mRNA degradation by binding to the 5' UTR of target mRNAs and interacting with PNRC2 in a ligand-dependent manner which recruits the RNA helicase UPF1 and the mRNA-decapping enzyme DCP1A, leading to RNA decay. Could act as a coactivator for STAT5-dependent transcription upon growth hormone (GH) stimulation and could reveal an essential role of hepatic GR in the control of body growth. Mediates glucocorticoid-induced apoptosis. Promotes accurate chromosome segregation during mitosis. May act as a tumor suppressor. May play a negative role in adipogenesis through the regulation of lipolytic and antilipogenic gene expression. The polypeptide is Glucocorticoid receptor (NR3C1) (Aotus nancymaae (Ma's night monkey)).